The chain runs to 130 residues: Small ribosomal subunit protein uS8 (130 aa).

This sequence belongs to the universal ribosomal protein uS8 family. As to quaternary structure, part of the 30S ribosomal subunit. Contacts proteins S5 and S12.

Its function is as follows. One of the primary rRNA binding proteins, it binds directly to 16S rRNA central domain where it helps coordinate assembly of the platform of the 30S subunit. The polypeptide is Small ribosomal subunit protein uS8 (Shewanella loihica (strain ATCC BAA-1088 / PV-4)).